The sequence spans 356 residues: Glutamine synthetase cytosolic isozyme 1-1 (356 aa).

In terms of domain architecture, GS beta-grasp spans 19–99; the sequence is IIAEYIWIGG…VMCDCYTPAG (81 aa). The GS catalytic domain occupies 106 to 356; the sequence is KRHNAAKIFS…IAETTIIWKP (251 aa).

It belongs to the glutamine synthetase family. As to quaternary structure, homooctamer. As to expression, highly expressed in leaf blades, at intermediate levels in spikelets (rice flower) and at lower levels in roots.

The protein resides in the cytoplasm. It carries out the reaction L-glutamate + NH4(+) + ATP = L-glutamine + ADP + phosphate + H(+). Functionally, high-affinity glutamine synthetase involved in ammonium assimilation. Seems to be a major component of the cytosolic glutamine synthetic pathway in leaf blades. Plays an important role in maintaining carbon and nitrogen metabolic balance during ammonium assimilation in shoots and roots, thus controlling plant growth and development. Plays an important role in maintaining broad range of metabolites and transcripts involved in the maintenance of plant metabolic homeostasis and development of plastid in roots. This is Glutamine synthetase cytosolic isozyme 1-1 from Oryza sativa subsp. japonica (Rice).